The sequence spans 297 residues: Cell division protein FtsQ (297 aa).

Residues 1–33 (MRPLSFRRRTAQARPDPAPSRLSYRVQRLLLTP) lie on the Cytoplasmic side of the membrane. The chain crosses the membrane as a helical span at residues 34–54 (LFHALIRVGLPAFVLAFGVGW). Over 55–297 (LLQNQELRDE…IRGLTNDRIE (243 aa)) the chain is Periplasmic. A POTRA domain is found at 82–150 (FMVNAMSVSG…GILAIEIVER (69 aa)).

The protein belongs to the FtsQ/DivIB family. FtsQ subfamily.

The protein resides in the cell inner membrane. In terms of biological role, essential cell division protein. This chain is Cell division protein FtsQ, found in Dinoroseobacter shibae (strain DSM 16493 / NCIMB 14021 / DFL 12).